We begin with the raw amino-acid sequence, 155 residues long: uncharacterized protein (155 aa).

4 helical membrane passes run 2 to 24 (TFLF…PPIF), 62 to 84 (AVVN…YLVL), 97 to 116 (VFLI…FLVV), and 131 to 148 (VVLL…KVFN).

Its subcellular location is the cell membrane. This is an uncharacterized protein from Aquifex aeolicus (strain VF5).